Here is a 96-residue protein sequence, read N- to C-terminus: Probable quinol oxidase subunit 4 (96 aa).

Transmembrane regions (helical) follow at residues Thr-8–Thr-28, Thr-37–Leu-57, and Phe-68–Met-88.

The protein belongs to the cytochrome c oxidase bacterial subunit 4 family.

Its subcellular location is the cell membrane. The catalysed reaction is 2 a quinol + O2 = 2 a quinone + 2 H2O. In terms of biological role, catalyzes quinol oxidation with the concomitant reduction of oxygen to water. This is Probable quinol oxidase subunit 4 (qoxD) from Staphylococcus haemolyticus (strain JCSC1435).